We begin with the raw amino-acid sequence, 151 residues long: Small heat shock protein HspH (151 aa).

Residues 28–138 form the sHSP domain; the sequence is RAGEDNYPPY…KPRRIAINAA (111 aa).

This sequence belongs to the small heat shock protein (HSP20) family.

The protein is Small heat shock protein HspH (hspH) of Bradyrhizobium diazoefficiens (strain JCM 10833 / BCRC 13528 / IAM 13628 / NBRC 14792 / USDA 110).